Consider the following 390-residue polypeptide: Coenzyme A biosynthesis bifunctional protein CoaBC (390 aa).

The tract at residues 1 to 188 is phosphopantothenoylcysteine decarboxylase; the sequence is MDKNKHILIG…NQKDYLKNKK (188 aa). Cys156 acts as the Proton donor in catalysis. Positions 189 to 390 are phosphopantothenate--cysteine ligase; that stretch reads ILITASRTEE…VAKEILKILY (202 aa). Residues Asp277, Lys287, 304 to 307, Phe323, Lys338, and Lys342 each bind CTP; that span reads PDII.

This sequence in the N-terminal section; belongs to the HFCD (homo-oligomeric flavin containing Cys decarboxylase) superfamily. It in the C-terminal section; belongs to the PPC synthetase family. The cofactor is Mg(2+). FMN serves as cofactor.

It catalyses the reaction N-[(R)-4-phosphopantothenoyl]-L-cysteine + H(+) = (R)-4'-phosphopantetheine + CO2. The catalysed reaction is (R)-4'-phosphopantothenate + L-cysteine + CTP = N-[(R)-4-phosphopantothenoyl]-L-cysteine + CMP + diphosphate + H(+). The protein operates within cofactor biosynthesis; coenzyme A biosynthesis; CoA from (R)-pantothenate: step 2/5. It functions in the pathway cofactor biosynthesis; coenzyme A biosynthesis; CoA from (R)-pantothenate: step 3/5. Its function is as follows. Catalyzes two sequential steps in the biosynthesis of coenzyme A. In the first step cysteine is conjugated to 4'-phosphopantothenate to form 4-phosphopantothenoylcysteine. In the second step the latter compound is decarboxylated to form 4'-phosphopantotheine. The sequence is that of Coenzyme A biosynthesis bifunctional protein CoaBC from Borreliella burgdorferi (strain ATCC 35210 / DSM 4680 / CIP 102532 / B31) (Borrelia burgdorferi).